Here is a 264-residue protein sequence, read N- to C-terminus: S-adenosylmethionine decarboxylase proenzyme (264 aa).

Ser112 acts as the Schiff-base intermediate with substrate; via pyruvic acid in catalysis. Ser112 is modified (pyruvic acid (Ser); by autocatalysis). Residue His117 is the Proton acceptor; for processing activity of the active site. The active-site Proton donor; for catalytic activity is the Cys140.

The protein belongs to the prokaryotic AdoMetDC family. Type 2 subfamily. In terms of assembly, heterooctamer of four alpha and four beta chains arranged as a tetramer of alpha/beta heterodimers. Pyruvate is required as a cofactor. In terms of processing, is synthesized initially as an inactive proenzyme. Formation of the active enzyme involves a self-maturation process in which the active site pyruvoyl group is generated from an internal serine residue via an autocatalytic post-translational modification. Two non-identical subunits are generated from the proenzyme in this reaction, and the pyruvate is formed at the N-terminus of the alpha chain, which is derived from the carboxyl end of the proenzyme. The post-translation cleavage follows an unusual pathway, termed non-hydrolytic serinolysis, in which the side chain hydroxyl group of the serine supplies its oxygen atom to form the C-terminus of the beta chain, while the remainder of the serine residue undergoes an oxidative deamination to produce ammonia and the pyruvoyl group blocking the N-terminus of the alpha chain.

The catalysed reaction is S-adenosyl-L-methionine + H(+) = S-adenosyl 3-(methylsulfanyl)propylamine + CO2. It participates in amine and polyamine biosynthesis; S-adenosylmethioninamine biosynthesis; S-adenosylmethioninamine from S-adenosyl-L-methionine: step 1/1. In terms of biological role, catalyzes the decarboxylation of S-adenosylmethionine to S-adenosylmethioninamine (dcAdoMet), the propylamine donor required for the synthesis of the polyamines spermine and spermidine from the diamine putrescine. The protein is S-adenosylmethionine decarboxylase proenzyme of Salmonella typhi.